Here is a 470-residue protein sequence, read N- to C-terminus: Putative dipeptidase TSTA_079200 (470 aa).

A helical membrane pass occupies residues 40-60 (AWLFGLGTLGIILASVLLNPF). Positions 92 and 94 each coordinate Zn(2+). A disulfide bridge links C143 with C237. N-linked (GlcNAc...) asparagine glycosylation is present at N188. Zn(2+) is bound at residue E208. H235 is a substrate binding site. The Zn(2+) site is built by H279 and H300. Substrate-binding residues include R311 and D371.

Belongs to the metallo-dependent hydrolases superfamily. Peptidase M19 family. Zn(2+) serves as cofactor.

The protein localises to the membrane. It catalyses the reaction an L-aminoacyl-L-amino acid + H2O = 2 an L-alpha-amino acid. Hydrolyzes a wide range of dipeptides. This chain is Putative dipeptidase TSTA_079200, found in Talaromyces stipitatus (strain ATCC 10500 / CBS 375.48 / QM 6759 / NRRL 1006) (Penicillium stipitatum).